We begin with the raw amino-acid sequence, 523 residues long: REST corepressor 2 (523 aa).

Residues 1 to 43 form a disordered region; that stretch reads MPSVMEKPSAGSGILSRSRAKTAPNGGQPHSEDDSSEEEHSHD. The segment covering 30 to 43 has biased composition (basic and acidic residues); the sequence is HSEDDSSEEEHSHD. Ser31, Ser35, Ser36, and Ser63 each carry phosphoserine. The region spanning 44–129 is the ELM2 domain; the sequence is SMIRVGTNYQ…KSLADLANFT (86 aa). Lys88 is covalently cross-linked (Glycyl lysine isopeptide (Lys-Gly) (interchain with G-Cter in SUMO2)). The SANT 1 domain maps to 130 to 181; the sequence is PFPDEWTVEDKVLFEQAFGFHGKCFQRIQQMLPDKLIPSLVKYYYSWKKTRS. The interval 185–265 is disordered; that stretch reads VMDRQARRLG…RRRPPKGMYL (81 aa). Ser202 carries the post-translational modification Phosphoserine. The span at 248-260 shows a compositional bias: basic residues; the sequence is YRHHPLRTRRRPP. Positions 283–314 form a coiled coil; the sequence is TLRGLDSQLISLKRQVQSMKQTNSSLRQALEG. One can recognise an SANT 2 domain in the interval 327 to 378; that stretch reads KFNSRWTTDEQLLAVQAIRRYGKDFGAIAEVIGNKTLTQVKTFFVSYRRRFN. The disordered stretch occupies residues 387 to 523; sequence EAEQDGAPTA…AQLEPPAPSL (137 aa). Residues 432 to 459 are compositionally biased toward pro residues; sequence SVPPAPPPPPPPTSLSQPPPLLRPPLPT. The span at 460–482 shows a compositional bias: low complexity; the sequence is APTLLRQPPPLQQGRFLQPRLAP. Residue Arg479 is modified to Asymmetric dimethylarginine.

It belongs to the CoREST family.

It is found in the nucleus. In terms of biological role, may act as a component of a corepressor complex that represses transcription. The sequence is that of REST corepressor 2 (Rcor2) from Rattus norvegicus (Rat).